The chain runs to 491 residues: V-type proton ATPase subunit B 1 (491 aa).

R380 contacts ATP.

It belongs to the ATPase alpha/beta chains family. In terms of assembly, V-ATPase is a heteromultimeric enzyme made up of two complexes: the ATP-hydrolytic V1 complex and the proton translocation V0 complex. The V1 complex consists of three catalytic AB heterodimers that form a heterohexamer, three peripheral stalks each consisting of EG heterodimers, one central rotor including subunits D and F, and the regulatory subunits C and H. The proton translocation complex V0 consists of the proton transport subunit a, a ring of proteolipid subunits c9c'', rotary subunit d, subunits e and f, and the accessory subunits vah-19/Ac45 and vah-20/PRR. As to expression, expressed ubiquitously. Highly expressed in the H-shaped excretory cell, the excretory pore, the intestine, and hypodermal cells. Expressed in the nervous system. Expressed at low levels in muscles.

In terms of biological role, non-catalytic subunit of the V1 complex of vacuolar(H+)-ATPase (V-ATPase), a multisubunit enzyme composed of a peripheral complex (V1) that hydrolyzes ATP and a membrane integral complex (V0) that translocates protons. V-ATPase is responsible for acidifying and maintaining the pH of intracellular compartments and in some cell types, is targeted to the plasma membrane, where it is responsible for acidifying the extracellular environment. Essential for the proper assembly and activity of V-ATPase. Required maternally for early embryogenesis and zygotically during morphogenesis. Specifically, involved in the clearance of apoptotic cell corpses in embryos. Also, during embryonic development, the V-ATPase is required to repress fusion of epidermal cells probably by negatively regulating eff-1-mediated cell fusion. In neurons, required for necrotic cell death by promoting intracellular acidification. Required for cell death induced by hypoxia. Required for acidification of synaptic vesicles and the release of neurotransmitters from adult neurons. The chain is V-type proton ATPase subunit B 1 from Caenorhabditis elegans.